Reading from the N-terminus, the 283-residue chain is NifU-like protein 4, mitochondrial (283 aa).

A mitochondrion-targeting transit peptide spans 1-48 (MKGIARLVTSLSRIGGRKVVSGTSTVTSSSSSSLLLSRRSLFISATNL).

Belongs to the NifU family. In terms of tissue distribution, predominantly expressed in roots.

It is found in the mitochondrion. In terms of biological role, molecular scaffold for [Fe-S] cluster assembly of mitochondrial iron-sulfur proteins. The chain is NifU-like protein 4, mitochondrial (NIFU4) from Arabidopsis thaliana (Mouse-ear cress).